Consider the following 201-residue polypeptide: Lymphocyte antigen 6 complex locus protein G5b (201 aa).

The first 18 residues, 1-18 (MKVHMLVGVLVMVGFTVG), serve as a signal peptide directing secretion. The UPAR/Ly6 domain maps to 26-118 (RTCHFCLVED…SPQLQSSLPE (93 aa)). 5 disulfides stabilise this stretch: cysteine 28-cysteine 55, cysteine 31-cysteine 40, cysteine 47-cysteine 73, cysteine 81-cysteine 98, and cysteine 99-cysteine 104. Asparagine 141 and asparagine 183 each carry an N-linked (GlcNAc...) asparagine glycan.

In terms of assembly, forms oligomer. Post-translationally, N-glycosylated.

The protein resides in the secreted. The polypeptide is Lymphocyte antigen 6 complex locus protein G5b (LY6G5B) (Homo sapiens (Human)).